Consider the following 441-residue polypeptide: Methionine aminopeptidase 2A (441 aa).

The interval 1–103 (MAIGNPEVAT…SGDFPQGEIQ (103 aa)) is disordered. The span at 18 to 33 (AESSNGNESQLSSDLT) shows a compositional bias: polar residues. Positions 37 to 62 (DLAEVKEDEKDNNQEEEDGLKAEAST) are enriched in basic and acidic residues. Residues 63 to 76 (KKKKKKSKSKKKKS) are compositionally biased toward basic residues. His194 is a substrate binding site. Asp214, Asp225, and His294 together coordinate a divalent metal cation. His302 contacts substrate. A divalent metal cation contacts are provided by Glu327 and Glu422.

It belongs to the peptidase M24A family. Methionine aminopeptidase eukaryotic type 2 subfamily. Co(2+) is required as a cofactor. Zn(2+) serves as cofactor. It depends on Mn(2+) as a cofactor. Requires Fe(2+) as cofactor. Ubiquitous. Preferentially expressed in roots.

It localises to the cytoplasm. It carries out the reaction Release of N-terminal amino acids, preferentially methionine, from peptides and arylamides.. In terms of biological role, cotranslationally removes the N-terminal methionine from nascent proteins. The N-terminal methionine is often cleaved when the second residue in the primary sequence is small and uncharged (Met-Ala-, Cys, Gly, Pro, Ser, Thr, or Val). The protein is Methionine aminopeptidase 2A of Arabidopsis thaliana (Mouse-ear cress).